Here is a 226-residue protein sequence, read N- to C-terminus: Ribonuclease 3 (226 aa).

The 123-residue stretch at 7 to 129 (LPRLCRTLGY…IIGAIYLDSD (123 aa)) folds into the RNase III domain. Glu42 contacts Mg(2+). The active site involves Asp46. Residues Asp115 and Glu118 each coordinate Mg(2+). Glu118 is a catalytic residue. The DRBM domain maps to 156–226 (DAKTLLQEYL…AAQVLELLKK (71 aa)).

The protein belongs to the ribonuclease III family. In terms of assembly, homodimer. Requires Mg(2+) as cofactor.

Its subcellular location is the cytoplasm. The enzyme catalyses Endonucleolytic cleavage to 5'-phosphomonoester.. Functionally, digests double-stranded RNA. Involved in the processing of primary rRNA transcript to yield the immediate precursors to the large and small rRNAs (23S and 16S). Processes some mRNAs, and tRNAs when they are encoded in the rRNA operon. Processes pre-crRNA and tracrRNA of type II CRISPR loci if present in the organism. The protein is Ribonuclease 3 of Shewanella sp. (strain ANA-3).